Reading from the N-terminus, the 1402-residue chain is Erbin (1402 aa).

LRR repeat units follow at residues 23–44 (TVTT…IFTF), 47–68 (TLEE…LFNC), 70–91 (SLHK…IANL), 93–114 (NLRE…IKNC), 116–137 (VLTI…FSQL), 139–161 (NLTQ…GRLT), 162–183 (KLQI…MNRL), 185–206 (QLER…LEQL), 208–229 (GLRE…IGSL), 231–252 (QLTY…ISTC), 254–275 (NLQD…IGSL), 277–298 (NVTT…IGGL), 300–321 (SIEE…IGQL), 323–344 (NMRT…IGNW), 346–367 (NITV…MGDM), 369–391 (KLKV…TKLQ), and 392–413 (QLTA…QKET). Phosphoserine occurs at positions 440 and 444. 2 disordered regions span residues 465 to 489 (DEDK…PYPD) and 507 to 543 (DEET…TTKS). Residues 470 to 480 (EREAPPREGNL) are compositionally biased toward basic and acidic residues. Residue Tyr-483 is modified to Phosphotyrosine. Phosphothreonine is present on Thr-485. Positions 507-534 (DEETNEESGRDLKQHEDQQVVNKDKCVK) are enriched in basic and acidic residues. Residues Ser-595, Ser-599, Ser-600, and Ser-617 each carry the phosphoserine modification. Over residues 629–638 (NKKDDAKDAD) the composition is skewed to basic and acidic residues. The tract at residues 629–694 (NKKDDAKDAD…PVDSNSKVRQ (66 aa)) is disordered. The span at 647 to 659 (NSNQNNSNCSSPS) shows a compositional bias: low complexity. Over residues 660 to 689 (RMSDSVSLNTDSSQDTSLCSPVKQTPVDSN) the composition is skewed to polar residues. Phosphoserine occurs at positions 712, 849, 854, and 869. The disordered stretch occupies residues 824 to 864 (EDTAPSPGRVEPQKASSSADVGISKSTEDLSPQRSGPTGAV). A Phosphothreonine modification is found at Thr-914. Tyr-917 carries the post-translational modification Phosphotyrosine. Ser-928 is modified (phosphoserine). A Phosphotyrosine modification is found at Tyr-970. Disordered stretches follow at residues 990–1018 (WHPK…ENHS) and 1070–1093 (TTIQ…TRRT). Over residues 1070 to 1084 (TTIQRQSSVSSTASV) the composition is skewed to polar residues. Tyr-1097 carries the phosphotyrosine modification. Disordered regions lie at residues 1107–1187 (GRTP…VPHD), 1198–1217 (AKKL…CQDD), and 1222–1274 (EEQN…VARH). Polar residues-rich tracts occupy residues 1128 to 1139 (GPNTSRPQSARP) and 1149 to 1164 (MSVS…PSKR). Phosphoserine is present on residues Ser-1150 and Ser-1171. A phosphoserine mark is found at Leu-1231, Arg-1234, and Ser-1276. The PDZ domain occupies 1311 to 1400 (EIRVRVEKDP…AVDLIIVREV (90 aa)).

It belongs to the LAP (LRR and PDZ) protein family. As to quaternary structure, interacts with ERBB2, BPAG1 and ITGB4. May favor the localization of ERBB2, by restricting its presence to the basolateral membrane of epithelial cells. Also found to interact with ARVCF and delta catenin. Interacts (via C-terminus) with DST (via N-terminus). Interacts with NOD2 (via CARD domain). In terms of processing, isoform 2 is phosphorylated on Ser-1231 and Ser-1234.

It is found in the cell junction. Its subcellular location is the hemidesmosome. The protein resides in the nucleus membrane. The protein localises to the basolateral cell membrane. Functionally, acts as an adapter for the receptor ERBB2, in epithelia. By binding the unphosphorylated ERBB2 'Tyr-1248' receptor, it may contribute to stabilize this unphosphorylated state. Inhibits NOD2-dependent NF-kappa-B signaling and pro-inflammatory cytokine secretion. The protein is Erbin of Mus musculus (Mouse).